The primary structure comprises 183 residues: Shikimate kinase (183 aa).

14–19 (GAGKTT) lines the ATP pocket. Threonine 18 serves as a coordination point for Mg(2+). Substrate contacts are provided by aspartate 36, arginine 60, and glycine 82. Arginine 120 contributes to the ATP binding site. Arginine 139 is a binding site for substrate. Glutamine 156 is a binding site for ATP.

This sequence belongs to the shikimate kinase family. Monomer. Mg(2+) is required as a cofactor.

Its subcellular location is the cytoplasm. It carries out the reaction shikimate + ATP = 3-phosphoshikimate + ADP + H(+). Its pathway is metabolic intermediate biosynthesis; chorismate biosynthesis; chorismate from D-erythrose 4-phosphate and phosphoenolpyruvate: step 5/7. In terms of biological role, catalyzes the specific phosphorylation of the 3-hydroxyl group of shikimic acid using ATP as a cosubstrate. The sequence is that of Shikimate kinase from Thiobacillus denitrificans (strain ATCC 25259 / T1).